A 244-amino-acid chain; its full sequence is Haloacid dehalogenase-like hydrolase domain-containing protein 3 (244 aa).

It belongs to the HAD-like hydrolase superfamily.

This chain is Haloacid dehalogenase-like hydrolase domain-containing protein 3 (hdhd3), found in Xenopus laevis (African clawed frog).